Consider the following 153-residue polypeptide: Small ribosomal subunit protein eS19 (153 aa).

The protein belongs to the eukaryotic ribosomal protein eS19 family. In terms of assembly, part of the 30S ribosomal subunit.

Functionally, may be involved in maturation of the 30S ribosomal subunit. The chain is Small ribosomal subunit protein eS19 from Aeropyrum pernix (strain ATCC 700893 / DSM 11879 / JCM 9820 / NBRC 100138 / K1).